Here is a 499-residue protein sequence, read N- to C-terminus: Maturase K (499 aa).

This sequence belongs to the intron maturase 2 family. MatK subfamily.

It localises to the plastid. The protein resides in the chloroplast. Usually encoded in the trnK tRNA gene intron. Probably assists in splicing its own and other chloroplast group II introns. The protein is Maturase K of Gymnocladus chinensis (Soap tree).